The chain runs to 145 residues: Small ribosomal subunit protein eS19 (145 aa).

Lys23 is modified (N6-acetyllysine). At Arg67 the chain carries Omega-N-methylarginine. N6-acetyllysine is present on residues Lys111 and Lys115. The residue at position 143 (Lys143) is an N6-succinyllysine.

The protein belongs to the eukaryotic ribosomal protein eS19 family. Component of the small ribosomal subunit. Part of the small subunit (SSU) processome, composed of more than 70 proteins and the RNA chaperone small nucleolar RNA (snoRNA) U3. Interacts with RPS19BP1; the interaction is direct and mediates the integration of RPS19 in state post-A1. Interacts with RPS19BP1.

It is found in the cytoplasm. Its subcellular location is the nucleus. The protein localises to the nucleolus. In terms of biological role, component of the small ribosomal subunit. The ribosome is a large ribonucleoprotein complex responsible for the synthesis of proteins in the cell. Required for pre-rRNA processing and maturation of 40S ribosomal subunits. Part of the small subunit (SSU) processome, first precursor of the small eukaryotic ribosomal subunit. During the assembly of the SSU processome in the nucleolus, many ribosome biogenesis factors, an RNA chaperone and ribosomal proteins associate with the nascent pre-rRNA and work in concert to generate RNA folding, modifications, rearrangements and cleavage as well as targeted degradation of pre-ribosomal RNA by the RNA exosome. The protein is Small ribosomal subunit protein eS19 (RPS19) of Oryctolagus cuniculus (Rabbit).